The following is a 515-amino-acid chain: Ribosome assembly protein 4 (515 aa).

Residues 20 to 128 (REVAIIPKDL…LLYTPRAVFK (109 aa)) form an interaction with MDN1 region. Positions 29-125 (LPNVSIKFQA…QITLLYTPRA (97 aa)) are ubiquitin-like (UBL) domain. WD repeat units lie at residues 141 to 181 (GHGS…PMHT), 184 to 223 (GHYN…CLGD), 227 to 273 (GHSK…CQYT), 276 to 314 (GHTN…RCIN), 352 to 396 (AQKK…KPIA), 400 to 439 (GHQK…FIST), 442 to 481 (GHVA…LSVD), and 484 to 515 (GHKD…LWTH).

This sequence belongs to the NLE1/RSA4 family. In terms of assembly, associates with the pre-60S ribosomal particle. Interacts (via WD repeats) with uL18 (RPL5). Interacts (via UBL domain) with MDN1 (via VWFA/MIDAS domain). Interacts (via WD repeats) with NSA2.

Its subcellular location is the nucleus. It is found in the nucleolus. In terms of biological role, involved in ribosome biogenesis. Required for processing and efficient intra-nuclear transport of pre-60S ribosomal subunits. Interacts with the AAA-ATPase Midasin (MDN1/REA1), which is essential for the ATP-dependent dissociation of a group of nonribosomal factors from the pre-60S particle. This chain is Ribosome assembly protein 4, found in Saccharomyces cerevisiae (strain ATCC 204508 / S288c) (Baker's yeast).